Consider the following 268-residue polypeptide: E3 ubiquitin-protein ligase IAP-3 (268 aa).

BIR repeat units follow at residues 18–84 and 111–178; these read KAAR…CPFV and EAAR…CEYV. Residues Cys148, Cys151, His168, and Cys175 each contribute to the Zn(2+) site. An RING-type zinc finger spans residues 221-256; the sequence is CKICLGAEKTVCFVPCGHVVACGKCAAGVTTCPVCR.

This sequence belongs to the IAP family. Auto-ubiquitinated.

The catalysed reaction is S-ubiquitinyl-[E2 ubiquitin-conjugating enzyme]-L-cysteine + [acceptor protein]-L-lysine = [E2 ubiquitin-conjugating enzyme]-L-cysteine + N(6)-ubiquitinyl-[acceptor protein]-L-lysine.. Its function is as follows. RING-finger E3 ubiquitin ligase required to prevent cellular apoptosis in infected cells. Ubiquitinates and subsequently targets host pro-apoptotic cellular proteins such as HID for degradation by the proteasome. The protein is E3 ubiquitin-protein ligase IAP-3 (IAP3) of Orgyia pseudotsugata multicapsid polyhedrosis virus (OpMNPV).